Consider the following 437-residue polypeptide: Putrescine hydroxycinnamoyltransferase 3 (437 aa).

Active-site proton acceptor residues include His151 and Asp383.

This sequence belongs to the plant acyltransferase family. As to expression, highly expressed in roots. Expressed at low levels in shoots and flowers.

In terms of biological role, hydroxycinnamoyl transferase that catalyzes the transfer of an acyl from p-coumaryol-CoA to putrescine, to produce coumaroyl putrescine. Can use feruloyl-CoA and caffeoyl-CoA as acyl donors. This is Putrescine hydroxycinnamoyltransferase 3 from Oryza sativa subsp. japonica (Rice).